The primary structure comprises 1247 residues: Leucine-rich repeat-containing protein 53 (1247 aa).

LRR repeat units lie at residues 34–55 (TTRV…NLSL), 58–79 (NLAL…ALHG), 82–102 (MLRT…TDHT), 108–129 (SLQV…WFRN), 132–153 (GLTR…SFGG), 158–179 (SLRY…AFRP), and 182–203 (QLQE…FTPL). The LRRCT domain maps to 214–271 (NQWSCTCDLHPLARFLRNYIKSSAHTLRNAKDLNCQPSTAAVAAAQSVLRLSETNCDS). The chain crosses the membrane as a helical span at residues 294–314 (LLTVLGFAGAVGLTCLGLVVF). Disordered regions lie at residues 828–866 (SAGH…EDAT), 887–927 (VLPF…SPRN), and 1223–1247 (ENSA…LETE). 2 stretches are compositionally biased toward polar residues: residues 898–927 (DQGT…SPRN) and 1238–1247 (YATTSPLETE).

The protein resides in the membrane. In Homo sapiens (Human), this protein is Leucine-rich repeat-containing protein 53 (LRRC53).